Consider the following 227-residue polypeptide: Charged multivesicular body protein 4c (227 aa).

Positions 1-27 (MSKITKLFKSSGGSGSSSKNRKGPSAQ) are disordered. 2 coiled-coil regions span residues 32 to 94 (KLRE…STIE) and 129 to 187 (LEKI…MANV). Residues 178–227 (EDLNSQMANVNLPSVPSSKLPSTKLPSRPASSRKKVEDDDDMQMLAAWAT) are disordered. The span at 189-206 (LPSVPSSKLPSTKLPSRP) shows a compositional bias: low complexity.

Belongs to the SNF7 family. In terms of assembly, probable core component of the endosomal sorting required for transport complex III (ESCRT-III). ESCRT-III components are thought to multimerize to form a flat lattice on the perimeter membrane of the endosome.

The protein localises to the cytoplasm. It localises to the cytosol. The protein resides in the late endosome membrane. Probable core component of the endosomal sorting required for transport complex III (ESCRT-III) which is involved in multivesicular bodies (MVBs) formation and sorting of endosomal cargo proteins into MVBs. MVBs contain intraluminal vesicles (ILVs) that are generated by invagination and scission from the limiting membrane of the endosome and mostly are delivered to lysosomes enabling degradation of membrane proteins, such as stimulated growth factor receptors, lysosomal enzymes and lipids. Key component of the cytokinesis checkpoint, a process required to delay abscission to prevent both premature resolution of intercellular chromosome bridges and accumulation of DNA damage. The sequence is that of Charged multivesicular body protein 4c (chmp4c) from Xenopus laevis (African clawed frog).